We begin with the raw amino-acid sequence, 374 residues long: UPF0754 membrane protein SAS1767 (374 aa).

Helical transmembrane passes span 4 to 24 (LFII…TNVI) and 354 to 374 (SLGF…AIFV).

The protein belongs to the UPF0754 family.

The protein resides in the cell membrane. The sequence is that of UPF0754 membrane protein SAS1767 from Staphylococcus aureus (strain MSSA476).